A 145-amino-acid polypeptide reads, in one-letter code: Large ribosomal subunit protein eL32 (145 aa).

It belongs to the eukaryotic ribosomal protein eL32 family.

The polypeptide is Large ribosomal subunit protein eL32 (rpl32e) (Aeropyrum pernix (strain ATCC 700893 / DSM 11879 / JCM 9820 / NBRC 100138 / K1)).